Reading from the N-terminus, the 508-residue chain is Glycerol kinase (508 aa).

Residue Thr-17 participates in ADP binding. Positions 17, 18, and 19 each coordinate ATP. Sn-glycerol 3-phosphate is bound at residue Thr-17. Residue Arg-21 participates in ADP binding. Sn-glycerol 3-phosphate contacts are provided by Arg-87, Glu-88, Tyr-139, and Asp-256. Glycerol is bound by residues Arg-87, Glu-88, Tyr-139, Asp-256, and Gln-257. ADP-binding residues include Thr-278 and Gly-322. Residues Thr-278, Gly-322, Gln-326, and Ala-423 each contribute to the ATP site. Residues Ala-423 and Asn-427 each contribute to the ADP site.

It belongs to the FGGY kinase family.

The enzyme catalyses glycerol + ATP = sn-glycerol 3-phosphate + ADP + H(+). It participates in polyol metabolism; glycerol degradation via glycerol kinase pathway; sn-glycerol 3-phosphate from glycerol: step 1/1. Its activity is regulated as follows. Inhibited by fructose 1,6-bisphosphate (FBP). In terms of biological role, key enzyme in the regulation of glycerol uptake and metabolism. Catalyzes the phosphorylation of glycerol to yield sn-glycerol 3-phosphate. The chain is Glycerol kinase from Corynebacterium efficiens (strain DSM 44549 / YS-314 / AJ 12310 / JCM 11189 / NBRC 100395).